Consider the following 539-residue polypeptide: Chaperonin GroEL (539 aa).

Residues 29 to 32 (TLGP), 86 to 90 (DGTTT), glycine 413, 479 to 481 (DAL), and aspartate 495 each bind ATP.

It belongs to the chaperonin (HSP60) family. Forms a cylinder of 14 subunits composed of two heptameric rings stacked back-to-back. Interacts with the co-chaperonin GroES.

Its subcellular location is the cytoplasm. The enzyme catalyses ATP + H2O + a folded polypeptide = ADP + phosphate + an unfolded polypeptide.. Functionally, together with its co-chaperonin GroES, plays an essential role in assisting protein folding. The GroEL-GroES system forms a nano-cage that allows encapsulation of the non-native substrate proteins and provides a physical environment optimized to promote and accelerate protein folding. The protein is Chaperonin GroEL of Thermosipho africanus (strain TCF52B).